The primary structure comprises 130 residues: MAENQYYGTGRRKSSAARVFIKPGSGNIVINKRALEEYFGRPTSCMVVKQPLELVDMVEKLDLYITVKGGGISGQAGAIRHGITRALMEYDESLRPALRAAGYVTRDARCVERKKVGLRKARRRPQFSKR.

It belongs to the universal ribosomal protein uS9 family.

In Vibrio vulnificus (strain CMCP6), this protein is Small ribosomal subunit protein uS9.